A 232-amino-acid chain; its full sequence is Sensory rhodopsin III (232 aa).

7 helical membrane passes run 5 to 25, 39 to 59, 73 to 93, 100 to 120, 125 to 145, 168 to 188, and 194 to 214; these read IVWY…FVWF, LPPI…LIAG, FADW…LAGV, LAVA…SMSG, IAFA…IKTF, VVTW…TGII, and NFLV…ILLV. K205 is modified (N6-(retinylidene)lysine).

Belongs to the archaeal/bacterial/fungal opsin family. As to quaternary structure, interacts with HtrM. Post-translationally, the covalent binding of retinal to the apoprotein, bacterioopsin, generates bacteriorhodopsin.

The protein resides in the membrane. Functionally, sensory rhodopsin. Associates with an unusual transducer lacking a methyl-accepting transducer domain found in all other photosensory transducers. The chromophore is all-trans-retinal in the dark. In Haloarcula marismortui (strain ATCC 43049 / DSM 3752 / JCM 8966 / VKM B-1809) (Halobacterium marismortui), this protein is Sensory rhodopsin III (xop2).